Consider the following 342-residue polypeptide: S-adenosylmethionine:tRNA ribosyltransferase-isomerase (342 aa).

Belongs to the QueA family. As to quaternary structure, monomer.

The protein resides in the cytoplasm. It catalyses the reaction 7-aminomethyl-7-carbaguanosine(34) in tRNA + S-adenosyl-L-methionine = epoxyqueuosine(34) in tRNA + adenine + L-methionine + 2 H(+). It participates in tRNA modification; tRNA-queuosine biosynthesis. Transfers and isomerizes the ribose moiety from AdoMet to the 7-aminomethyl group of 7-deazaguanine (preQ1-tRNA) to give epoxyqueuosine (oQ-tRNA). The protein is S-adenosylmethionine:tRNA ribosyltransferase-isomerase of Zymomonas mobilis subsp. mobilis (strain ATCC 31821 / ZM4 / CP4).